The chain runs to 487 residues: UDP-glycosyltransferase 72E1 (487 aa).

His18 (proton acceptor) is an active-site residue. Residue His18 coordinates an anthocyanidin. Asp116 serves as the catalytic Charge relay. UDP-alpha-D-glucose contacts are provided by Ala351, Gln353, His368, Trp371, Asn372, Ser373, and Glu376. Ala391 is an an anthocyanidin binding site. UDP-alpha-D-glucose is bound by residues Glu392 and Gln393.

It belongs to the UDP-glycosyltransferase family. As to quaternary structure, interacts with SIS8. In terms of tissue distribution, expressed in seedlings, roots and leaves.

The protein localises to the nucleus. It carries out the reaction (E)-coniferaldehyde + UDP-alpha-D-glucose = 4-O-(beta-D-glucosyl)-4-(E)-coniferyl aldehyde + UDP + H(+). It catalyses the reaction (E)-sinapaldehyde + UDP-alpha-D-glucose = 4-O-(beta-D-glucosyl)-4-trans-sinapoyl aldehyde + UDP + H(+). In terms of biological role, UDP-glycosyltransferase that glucosylates coniferyl aldehyde to form coniferyl aldehyde 4-O-glucoside. Glucosylates sinapyl aldehyde to form sinapyl aldehyde 4-O-glucoside. Is not active in presence of coniferyl alcohol or sinapyl alcohol. Can glucosylate the phytotoxic xenobiotic compound 2,4,5-trichlorophenol (TCP). The protein is UDP-glycosyltransferase 72E1 of Arabidopsis thaliana (Mouse-ear cress).